The sequence spans 488 residues: Cardiolipin synthase 2 (488 aa).

The next 2 membrane-spanning stretches (helical) occupy residues 8-28 (IIIN…AFII) and 39-59 (IWAW…LYLL). 2 PLD phosphodiesterase domains span residues 223–250 (MNNR…GDEY) and 401–428 (DNGF…DNRS). Active-site residues include histidine 228, lysine 230, aspartate 235, histidine 406, lysine 408, and aspartate 413.

Belongs to the phospholipase D family. Cardiolipin synthase subfamily.

Its subcellular location is the cell membrane. The enzyme catalyses 2 a 1,2-diacyl-sn-glycero-3-phospho-(1'-sn-glycerol) = a cardiolipin + glycerol. Its function is as follows. Catalyzes the reversible phosphatidyl group transfer from one phosphatidylglycerol molecule to another to form cardiolipin (CL) (diphosphatidylglycerol) and glycerol. This Staphylococcus epidermidis (strain ATCC 35984 / DSM 28319 / BCRC 17069 / CCUG 31568 / BM 3577 / RP62A) protein is Cardiolipin synthase 2 (cls2).